The primary structure comprises 205 residues: ATP-dependent Clp protease proteolytic subunit (205 aa).

Catalysis depends on Ser109, which acts as the Nucleophile. The active site involves His134.

The protein belongs to the peptidase S14 family. Fourteen ClpP subunits assemble into 2 heptameric rings which stack back to back to give a disk-like structure with a central cavity, resembling the structure of eukaryotic proteasomes.

It is found in the cytoplasm. It catalyses the reaction Hydrolysis of proteins to small peptides in the presence of ATP and magnesium. alpha-casein is the usual test substrate. In the absence of ATP, only oligopeptides shorter than five residues are hydrolyzed (such as succinyl-Leu-Tyr-|-NHMec, and Leu-Tyr-Leu-|-Tyr-Trp, in which cleavage of the -Tyr-|-Leu- and -Tyr-|-Trp bonds also occurs).. Its function is as follows. Cleaves peptides in various proteins in a process that requires ATP hydrolysis. Has a chymotrypsin-like activity. Plays a major role in the degradation of misfolded proteins. The polypeptide is ATP-dependent Clp protease proteolytic subunit (Baumannia cicadellinicola subsp. Homalodisca coagulata).